Consider the following 457-residue polypeptide: Argininosuccinate lyase (457 aa).

Belongs to the lyase 1 family. Argininosuccinate lyase subfamily.

It is found in the cytoplasm. It catalyses the reaction 2-(N(omega)-L-arginino)succinate = fumarate + L-arginine. It functions in the pathway amino-acid biosynthesis; L-arginine biosynthesis; L-arginine from L-ornithine and carbamoyl phosphate: step 3/3. This Haemophilus influenzae (strain PittEE) protein is Argininosuccinate lyase.